The following is a 362-amino-acid chain: Phosphoserine aminotransferase (362 aa).

Residue arginine 42 coordinates L-glutamate. Pyridoxal 5'-phosphate contacts are provided by residues 76–77 (AR), tryptophan 102, threonine 154, aspartate 174, and glutamine 197. Lysine 198 is subject to N6-(pyridoxal phosphate)lysine. Position 239–240 (239–240 (NT)) interacts with pyridoxal 5'-phosphate.

Belongs to the class-V pyridoxal-phosphate-dependent aminotransferase family. SerC subfamily. Homodimer. It depends on pyridoxal 5'-phosphate as a cofactor.

Its subcellular location is the cytoplasm. It catalyses the reaction O-phospho-L-serine + 2-oxoglutarate = 3-phosphooxypyruvate + L-glutamate. The enzyme catalyses 4-(phosphooxy)-L-threonine + 2-oxoglutarate = (R)-3-hydroxy-2-oxo-4-phosphooxybutanoate + L-glutamate. It participates in amino-acid biosynthesis; L-serine biosynthesis; L-serine from 3-phospho-D-glycerate: step 2/3. Its pathway is cofactor biosynthesis; pyridoxine 5'-phosphate biosynthesis; pyridoxine 5'-phosphate from D-erythrose 4-phosphate: step 3/5. Functionally, catalyzes the reversible conversion of 3-phosphohydroxypyruvate to phosphoserine and of 3-hydroxy-2-oxo-4-phosphonooxybutanoate to phosphohydroxythreonine. The chain is Phosphoserine aminotransferase from Buchnera aphidicola subsp. Cinara cedri (strain Cc).